A 426-amino-acid chain; its full sequence is Glutamate-1-semialdehyde 2,1-aminomutase (426 aa).

An N6-(pyridoxal phosphate)lysine modification is found at K265.

This sequence belongs to the class-III pyridoxal-phosphate-dependent aminotransferase family. HemL subfamily. In terms of assembly, homodimer. Pyridoxal 5'-phosphate is required as a cofactor.

Its subcellular location is the cytoplasm. The enzyme catalyses (S)-4-amino-5-oxopentanoate = 5-aminolevulinate. It functions in the pathway porphyrin-containing compound metabolism; protoporphyrin-IX biosynthesis; 5-aminolevulinate from L-glutamyl-tRNA(Glu): step 2/2. The chain is Glutamate-1-semialdehyde 2,1-aminomutase from Escherichia coli (strain K12 / DH10B).